We begin with the raw amino-acid sequence, 459 residues long: Nuclear hormone receptor family member nhr-11 (459 aa).

The nuclear receptor DNA-binding region spans Gly-2–Ser-81. 2 consecutive NR C4-type zinc fingers follow at residues Cys-5–Cys-26 and Cys-42–Cys-69. 2 disordered regions span residues Arg-90 to Asp-119 and Asp-134 to Asp-162. Low complexity predominate over residues Asn-97–Pro-115. An NR LBD domain is found at Glu-188 to Gln-458.

The protein belongs to the nuclear hormone receptor family.

It is found in the nucleus. Its function is as follows. Orphan nuclear receptor. The polypeptide is Nuclear hormone receptor family member nhr-11 (nhr-11) (Caenorhabditis elegans).